The chain runs to 528 residues: 3-ketoacyl-CoA synthase 2 (528 aa).

A run of 2 helical transmembrane segments spans residues 36–56 (LGYH…VGLL) and 78–98 (FHFL…TLYF). The FAE domain occupies 97–388 (YFTTRPRRIF…FFATLVARKV (292 aa)). Catalysis depends on residues Cys-241, His-320, His-407, His-411, and Asn-444.

It belongs to the thiolase-like superfamily. Chalcone/stilbene synthases family. Expressed in siliques, flowers and stems. In young seedlings, expressed in the central cylinder of primary roots, in emerging lateral roots and in their root cap, but not in aboveground tissues such as hypocotyls, cotyledons and leaves. Expressed in sepals in mature flowers and in the chalaza and micropyle region of developing seeds shortly prior to or just after the detachment from the funiculus. Expressed in roots, flowers, cauline leaves and siliques.

Its subcellular location is the membrane. It catalyses the reaction a very-long-chain acyl-CoA + malonyl-CoA + H(+) = a very-long-chain 3-oxoacyl-CoA + CO2 + CoA. The protein operates within lipid metabolism; fatty acid biosynthesis. With respect to regulation, inhibited by K3 herbicides such as allidochlor, anilofos, cafenstrole and flufenacet. Strongly inhibited by metazachlor. In terms of biological role, mediates the synthesis of VLCFAs from 22 to 26 carbons in length (e.g. C22, C24, C26). Involved in the elongation of C20 fatty acid suberin precursors. Functionally redundant with KCS20 in the two-carbon elongation of C22 fatty acids that is required for cuticular wax and root suberin biosynthesis. This chain is 3-ketoacyl-CoA synthase 2, found in Arabidopsis thaliana (Mouse-ear cress).